A 791-amino-acid polypeptide reads, in one-letter code: uncharacterized protein (791 aa).

Transmembrane regions (helical) follow at residues 104-124 (MWILAFGLATVIAGVDAFFLM), 131-151 (IAAIVALLVAYPLGQLWYYII), 177-197 (ACLYIFVNICVSAKLVNTLII), and 226-246 (WSGLALPILVYPPTLIWPSVL). N-linked (GlcNAc...) asparagine glycosylation occurs at asparagine 265. 8 helical membrane passes run 274–294 (FFIVFVASFIWYWFPDLIFPA), 309–329 (SAVLSQIFGVKTGLGLFPLTL), 346–366 (WATCCIFTSFVFWIWIVLPGL), 421–441 (FIINIALSLGAFSSMMISFFL), 471–491 (VHWGFYLASIIVSLGLGFAFT), 501–521 (SYGFVVSMVIGAALYIPLSLI), 533–553 (AFFEIVAAFWFNGQPMALLYF), and 583–603 (LVAALLFTSGIWSSLVNSAVT). An N-linked (GlcNAc...) asparagine glycan is attached at asparagine 621. A run of 3 helical transmembrane segments spans residues 653–673 (FVMWFFLVGAVVSVVVYLLQI), 697–717 (SVTGINYSTWAAVAFCFNYLI), and 733–753 (AAAMDCGVAIAGLFIYFCVVY). Asparagine 759 carries an N-linked (GlcNAc...) asparagine glycan.

Belongs to the oligopeptide OPT transporter family.

The protein resides in the membrane. This is an uncharacterized protein from Schizosaccharomyces pombe (strain 972 / ATCC 24843) (Fission yeast).